Here is a 584-residue protein sequence, read N- to C-terminus: uncharacterized protein (584 aa).

Positions 353-375 (NSEGQTNAETSLNGKGTVGNQWA) are enriched in polar residues. 3 disordered regions span residues 353-379 (NSEG…SPPE), 400-426 (LESK…VSSH), and 463-565 (SVDS…CNSG). The span at 502–511 (KANSPASSRL) shows a compositional bias: polar residues. A compositionally biased stretch (basic and acidic residues) spans 516–535 (DSSHLSKHVNFDKNPDHSEA).

This is an uncharacterized protein from Mus musculus (Mouse).